A 42-amino-acid chain; its full sequence is Photosystem II reaction center protein J (42 aa).

A helical membrane pass occupies residues 10-30 (IPLWLVLTIIGLAAIALLALF).

This sequence belongs to the PsbJ family. In terms of assembly, PSII is composed of 1 copy each of membrane proteins PsbA, PsbB, PsbC, PsbD, PsbE, PsbF, PsbH, PsbI, PsbJ, PsbK, PsbL, PsbM, PsbT, PsbY, PsbZ, Psb30/Ycf12, at least 3 peripheral proteins of the oxygen-evolving complex and a large number of cofactors. It forms dimeric complexes.

The protein resides in the plastid. It localises to the chloroplast thylakoid membrane. This protein is a component of the reaction center of photosystem II. Functionally, one of the components of the core complex of photosystem II (PSII). PSII is a light-driven water:plastoquinone oxidoreductase that uses light energy to abstract electrons from H(2)O, generating O(2) and a proton gradient subsequently used for ATP formation. It consists of a core antenna complex that captures photons, and an electron transfer chain that converts photonic excitation into a charge separation. This Euglena gracilis protein is Photosystem II reaction center protein J.